The following is a 206-amino-acid chain: Large ribosomal subunit protein uL3 (206 aa).

Residues 116-149 form a disordered region; that stretch reads GFQGAIKRHNQSRGPMSHGSRYHRRPGSMGPVAP.

It belongs to the universal ribosomal protein uL3 family. As to quaternary structure, part of the 50S ribosomal subunit. Forms a cluster with proteins L14 and L19.

Functionally, one of the primary rRNA binding proteins, it binds directly near the 3'-end of the 23S rRNA, where it nucleates assembly of the 50S subunit. The sequence is that of Large ribosomal subunit protein uL3 from Shouchella clausii (strain KSM-K16) (Alkalihalobacillus clausii).